The chain runs to 281 residues: Phosphatidylglycerol--prolipoprotein diacylglyceryl transferase (281 aa).

The next 4 helical transmembrane spans lie at Val-23–Trp-43, Phe-71–Tyr-91, Trp-107–Phe-127, and Ile-133–Val-153. Arg-154 is an a 1,2-diacyl-sn-glycero-3-phospho-(1'-sn-glycerol) binding site. 3 helical membrane-spanning segments follow: residues Leu-189–Val-209, Gly-217–Phe-237, and Leu-247–Leu-267.

It belongs to the Lgt family.

Its subcellular location is the cell inner membrane. The enzyme catalyses L-cysteinyl-[prolipoprotein] + a 1,2-diacyl-sn-glycero-3-phospho-(1'-sn-glycerol) = an S-1,2-diacyl-sn-glyceryl-L-cysteinyl-[prolipoprotein] + sn-glycerol 1-phosphate + H(+). Its pathway is protein modification; lipoprotein biosynthesis (diacylglyceryl transfer). Catalyzes the transfer of the diacylglyceryl group from phosphatidylglycerol to the sulfhydryl group of the N-terminal cysteine of a prolipoprotein, the first step in the formation of mature lipoproteins. The sequence is that of Phosphatidylglycerol--prolipoprotein diacylglyceryl transferase from Brucella anthropi (strain ATCC 49188 / DSM 6882 / CCUG 24695 / JCM 21032 / LMG 3331 / NBRC 15819 / NCTC 12168 / Alc 37) (Ochrobactrum anthropi).